Consider the following 383-residue polypeptide: ERCC4 domain-containing protein EP364R (383 aa).

The 99-residue stretch at 3 to 101 (FLVADHREHH…QLYFFVEGPA (99 aa)) folds into the ERCC4 domain. The disordered stretch occupies residues 336–367 (LHKVSDEASENASHDASENASDKVSSPTGHQT). Over residues 347-356 (ASHDASENAS) the composition is skewed to basic and acidic residues. Positions 357–367 (DKVSSPTGHQT) are enriched in polar residues.

This sequence belongs to the asfivirus EP364R family.

Its function is as follows. Plays a role in the inhibition of type I interferon signaling pathway. Mechanistically, specifically interacts with 2',3'-cGAMP and cleaves it via its phosphodiesterase activity. In turn, prevents 2',3'-cGAMP interaction with host ER-resident STING1 leading to inhibition of downstream signaling pathway and type I interferon production. This is ERCC4 domain-containing protein EP364R from Ornithodoros (relapsing fever ticks).